The primary structure comprises 277 residues: Glutamate racemase (277 aa).

Residues 25–26 (DS) and 57–58 (YG) contribute to the substrate site. The active-site Proton donor/acceptor is the cysteine 89. 90 to 91 (NT) provides a ligand contact to substrate. Cysteine 204 (proton donor/acceptor) is an active-site residue. 205 to 206 (TH) provides a ligand contact to substrate.

This sequence belongs to the aspartate/glutamate racemases family.

It catalyses the reaction L-glutamate = D-glutamate. It participates in cell wall biogenesis; peptidoglycan biosynthesis. Functionally, provides the (R)-glutamate required for cell wall biosynthesis. In Brucella abortus (strain 2308), this protein is Glutamate racemase.